Here is a 74-residue protein sequence, read N- to C-terminus: Protein kish-B (74 aa).

A signal peptide spans Met-1–Ala-22. At Tyr-23 to Gly-52 the chain is on the extracellular side. The helical transmembrane segment at Thr-53–Ile-73 threads the bilayer. Residue Lys-74 is a topological domain, cytoplasmic.

The protein belongs to the KISH family.

Its subcellular location is the golgi apparatus membrane. In terms of biological role, involved in the early part of the secretory pathway. The chain is Protein kish-B (TMEM167B) from Homo sapiens (Human).